Consider the following 662-residue polypeptide: DNA ligase (662 aa).

Residues 34–38, 83–84, and glutamate 113 each bind NAD(+); these read DYEYD and SI. Lysine 115 serves as the catalytic N6-AMP-lysine intermediate. Arginine 136, glutamate 172, lysine 286, and lysine 310 together coordinate NAD(+). The Zn(2+) site is built by cysteine 404, cysteine 407, cysteine 422, and cysteine 427. Residues 583–662 enclose the BRCT domain; that stretch reads KSGSTCFGKA…EAFTNLIHLE (80 aa).

It belongs to the NAD-dependent DNA ligase family. LigA subfamily. Mg(2+) is required as a cofactor. It depends on Mn(2+) as a cofactor.

It carries out the reaction NAD(+) + (deoxyribonucleotide)n-3'-hydroxyl + 5'-phospho-(deoxyribonucleotide)m = (deoxyribonucleotide)n+m + AMP + beta-nicotinamide D-nucleotide.. In terms of biological role, DNA ligase that catalyzes the formation of phosphodiester linkages between 5'-phosphoryl and 3'-hydroxyl groups in double-stranded DNA using NAD as a coenzyme and as the energy source for the reaction. It is essential for DNA replication and repair of damaged DNA. The polypeptide is DNA ligase (Chlamydia pneumoniae (Chlamydophila pneumoniae)).